A 307-amino-acid chain; its full sequence is Polysialic acid O-acetyltransferase (307 aa).

The span at 1–90 (MLRLKTQDSR…LKTQDSRLKT (90 aa)) shows a compositional bias: basic and acidic residues. The tract at residues 1 to 95 (MLRLKTQDSR…SRLKTQDSFS (95 aa)) is disordered. 13 consecutive repeat copies span residues 3–9 (RLKTQDS), 10–16 (RLKTQDS), 17–23 (RLKTQDS), 24–30 (RLKTQDS), 31–37 (RLKTQDS), 38–44 (RLKTQDS), 45–51 (RLKTQDS), 52–58 (RLKTQDS), 59–65 (RLKTQDS), 66–72 (RLKTQDS), 73–79 (RLKTQDS), 80–86 (RLKTQDS), and 87–93 (RLKTQDS). The tract at residues 3 to 93 (RLKTQDSRLK…QDSRLKTQDS (91 aa)) is 13 X 7 AA tandem repeat of RLKTQDS encoded by a 7 nucleotide repeat. Acetyl-CoA-binding positions include 208–210 (DGH), arginine 237, lysine 243, lysine 261, and lysine 278.

It belongs to the transferase hexapeptide repeat family. Homotrimer. Hexamer formed by two homotrimers.

It catalyses the reaction [N-acetyl-alpha-D-neuraminosyl-(2-&gt;8)](n) + n acetyl-CoA = [N,O(9)-diacetyl-alpha-D-neuraminosyl-(2-&gt;8)](n) + n CoA. The enzyme catalyses [N-acetyl-alpha-D-neuraminosyl-(2-&gt;8)](n) + n acetyl-CoA = [O(7),N-diacetyl-alpha-D-neuraminosyl-(2-&gt;8)](n) + n CoA. Functionally, catalyzes the O-acetylation of capsular polymeric sialic acid. Shows high substrate specificity toward polymers of sialic acid that contains a large number of residues. The sequence is that of Polysialic acid O-acetyltransferase from Escherichia coli O1:K1 / APEC.